A 269-amino-acid chain; its full sequence is NAD-capped RNA hydrolase NudC (269 aa).

Residue Arg74 coordinates substrate. The Zn(2+) site is built by Cys103, Cys106, Cys121, and Cys124. Position 129 (Tyr129) interacts with substrate. One can recognise a Nudix hydrolase domain in the interval 130–253 (PRIFPCIIVA…TIARQLIENT (124 aa)). A divalent metal cation contacts are provided by Ala163, Glu179, and Glu183. A Nudix box motif is present at residues 164–185 (GFLEVGETLEQCVAREVKEETG). 197 to 204 (QPWAFPSS) serves as a coordination point for substrate. Position 224 (Glu224) interacts with a divalent metal cation. Ala246 is a binding site for substrate.

This sequence belongs to the Nudix hydrolase family. NudC subfamily. In terms of assembly, homodimer. The cofactor is Mg(2+). Mn(2+) serves as cofactor. Zn(2+) is required as a cofactor.

It carries out the reaction a 5'-end NAD(+)-phospho-ribonucleoside in mRNA + H2O = a 5'-end phospho-adenosine-phospho-ribonucleoside in mRNA + beta-nicotinamide D-ribonucleotide + 2 H(+). The catalysed reaction is NAD(+) + H2O = beta-nicotinamide D-ribonucleotide + AMP + 2 H(+). The enzyme catalyses NADH + H2O = reduced beta-nicotinamide D-ribonucleotide + AMP + 2 H(+). MRNA decapping enzyme that specifically removes the nicotinamide adenine dinucleotide (NAD) cap from a subset of mRNAs by hydrolyzing the diphosphate linkage to produce nicotinamide mononucleotide (NMN) and 5' monophosphate mRNA. The NAD-cap is present at the 5'-end of some mRNAs and stabilizes RNA against 5'-processing. Has preference for mRNAs with a 5'-end purine. Catalyzes the hydrolysis of a broad range of dinucleotide pyrophosphates. This Vibrio atlanticus (strain LGP32) (Vibrio splendidus (strain Mel32)) protein is NAD-capped RNA hydrolase NudC.